The chain runs to 423 residues: Glucose-1-phosphate adenylyltransferase (423 aa).

Alpha-D-glucose 1-phosphate contacts are provided by residues tyrosine 100, glycine 165, 180–181 (EK), and serine 191.

This sequence belongs to the bacterial/plant glucose-1-phosphate adenylyltransferase family. As to quaternary structure, homotetramer.

The enzyme catalyses alpha-D-glucose 1-phosphate + ATP + H(+) = ADP-alpha-D-glucose + diphosphate. Its pathway is glycan biosynthesis; glycogen biosynthesis. Functionally, involved in the biosynthesis of ADP-glucose, a building block required for the elongation reactions to produce glycogen. Catalyzes the reaction between ATP and alpha-D-glucose 1-phosphate (G1P) to produce pyrophosphate and ADP-Glc. The sequence is that of Glucose-1-phosphate adenylyltransferase from Lachnospira eligens (strain ATCC 27750 / DSM 3376 / VPI C15-48 / C15-B4) (Eubacterium eligens).